The primary structure comprises 97 residues: Large ribosomal subunit protein uL23 (97 aa).

It belongs to the universal ribosomal protein uL23 family. In terms of assembly, part of the 50S ribosomal subunit. Contacts protein L29, and trigger factor when it is bound to the ribosome.

Functionally, one of the early assembly proteins it binds 23S rRNA. One of the proteins that surrounds the polypeptide exit tunnel on the outside of the ribosome. Forms the main docking site for trigger factor binding to the ribosome. The sequence is that of Large ribosomal subunit protein uL23 from Brucella suis (strain ATCC 23445 / NCTC 10510).